The following is a 397-amino-acid chain: L-rhamnonate dehydratase (397 aa).

H25 and R51 together coordinate substrate. D217, E243, and E271 together coordinate Mg(2+). H321 serves as the catalytic Proton acceptor. Substrate is bound at residue E341.

Belongs to the mandelate racemase/muconate lactonizing enzyme family. RhamD subfamily. In terms of assembly, homooctamer; tetramer of dimers. The cofactor is Mg(2+).

It catalyses the reaction L-rhamnonate = 2-dehydro-3-deoxy-L-rhamnonate + H2O. Its pathway is carbohydrate degradation; L-rhamnose degradation. In terms of biological role, catalyzes the dehydration of L-rhamnonate to 2-keto-3-deoxy-L-rhamnonate (KDR). Also shows activity with L-lyxonate and L-mannonate, with much lower catalytic efficiency. Catalyzes the third step in an alternative pathway for rhamnose utilization that does not involve phosphorylated intermediates. This chain is L-rhamnonate dehydratase, found in Sphingomonas sp. (strain SKA58).